Reading from the N-terminus, the 140-residue chain is Actin-depolymerizing factor 8 (140 aa).

Ser6 carries the post-translational modification Phosphoserine. In terms of domain architecture, ADF-H spans 7–139 (GMHVNDECKI…SLDIIKGRLN (133 aa)).

The protein belongs to the actin-binding proteins ADF family. In terms of tissue distribution, expressed in the root trichoblast cells and developed root hairs.

It is found in the cytoplasm. Its subcellular location is the cytoskeleton. Its function is as follows. Actin-depolymerizing protein. Severs actin filaments (F-actin) and binds to actin monomers. The protein is Actin-depolymerizing factor 8 (ADF8) of Arabidopsis thaliana (Mouse-ear cress).